The following is a 355-amino-acid chain: Inositol polyphosphate multikinase (355 aa).

The residue at position 1 (Met1) is an N-acetylmethionine. Lys31 provides a ligand contact to ATP. Residue Ser97 is modified to Phosphoserine. Residues 118-120 and Asp131 each bind ATP; that span reads ENL. Substrate is bound at residue 127–135; the sequence is PNILDIKLG. Positions 271 and 274 each coordinate Ca(2+). The segment covering 284-304 has biased composition (acidic residues); sequence FIDDDDDDDDNDDDDDDDAEG. A disordered region spans residues 284 to 317; sequence FIDDDDDDDDNDDDDDDDAEGSSEGPKDKKTTGS. Asp325 serves as a coordination point for ATP. Gly334 is a Ca(2+) binding site.

It belongs to the inositol phosphokinase (IPK) family. As to quaternary structure, interacts with ARG80 and MCM1. Requires Ca(2+) as cofactor.

The protein resides in the nucleus. It carries out the reaction 1D-myo-inositol 1,4,5-trisphosphate + 2 ATP = 1D-myo-inositol 1,3,4,5,6-pentakisphosphate + 2 ADP + 2 H(+). The catalysed reaction is 1D-myo-inositol 1,4,5-trisphosphate + ATP = 1D-myo-inositol 1,4,5,6-tetrakisphosphate + ADP + H(+). The enzyme catalyses 1D-myo-inositol 1,4,5-trisphosphate + ATP = 1D-myo-inositol 1,3,4,5-tetrakisphosphate + ADP + H(+). It catalyses the reaction 1D-myo-inositol 1,4,5,6-tetrakisphosphate + ATP = 1D-myo-inositol 1,3,4,5,6-pentakisphosphate + ADP + H(+). It carries out the reaction a 1,2-diacyl-sn-glycero-3-phospho-(1D-myo-inositol-4,5-bisphosphate) + ATP = a 1,2-diacyl-sn-glycero-3-phospho-(1D-myo-inositol-3,4,5-trisphosphate) + ADP + H(+). Functionally, inositol phosphate kinase with both monophosphoinositol and diphosphoinositol polyphosphate synthase activities. Able to phosphorylate inositol 1,4,5-trisphosphate (Ins(1,4,5)P3) on both the carbon-3 and carbon-6 positions to synthesize inositol 1,3,4,5-tetrakisphosphate (Ins(1,3,4,5)P4) and inositol 1,4,5,6-tetrakisphosphate (Ins(1,4,5,6)P4), and then to subsequently phosphorylate and convert either isomer of InsP4 to inositol 1,3,4,5,6-pentakisphosphate (Ins(1,3,4,5,6)P5). Its predominant in vivo catalytic function is to convert Ins(1,4,5)P3 to Ins(1,4,5,6)P4 to Ins(1,3,4,5,6)P5 via 6- and 3-kinase activities. It can also use Ins(1,3,4,5,6)P5 as a substrate and act as a diphosphoinositol polyphosphate synthase to generate two different isomers of PP-InsP4. Also has a role in transcription regulation. Forms a complex with ARG80, ARG81 and MCM1 (ArgR-MCM1), which coordinates the expression of arginine anabolic and catabolic genes in response to arginine. Recruits ARG80 and MCM21 to stabilize them. Neither the kinase activity nor inositol phosphates are required for the formation of ArgR-MCM1 transcriptional complexes on DNA promoter elements and the control of arginine metabolism. In contrast, only the catalytic activity is required for PHO gene repression by phosphate and for NCR gene activation in response to nitrogen availability, indicating a role for inositol pyrophosphates in these controls. Inositol polyphosphates may be involved in the regulation of chromatin remodeling of transcription. Regulates nuclear mRNA export via inositol phosphate metabolism. Also has lipid kinase activity, transforming the lipid inositol phosphatidylinositol 4,5-bisphosphate (PI(4,5)P2) into phosphatidylinositol 3,4,5-trisphosphate (PI(3,4,5)P3) in the nucleus. Its kinase activity is necessary for the propagation of most [PSI+] prion variants. The chain is Inositol polyphosphate multikinase (ARG82) from Saccharomyces cerevisiae (strain ATCC 204508 / S288c) (Baker's yeast).